Consider the following 94-residue polypeptide: Large ribosomal subunit protein eL43A (94 aa).

A C4-type zinc finger spans residues 39 to 62 (CPFCGRNTVKRTAAGIWCCNGKGC).

Belongs to the eukaryotic ribosomal protein eL43 family. Component of the large ribosomal subunit (LSU). Mature yeast ribosomes consist of a small (40S) and a large (60S) subunit. The 40S small subunit contains 1 molecule of ribosomal RNA (18S rRNA) and at least 33 different proteins. The large 60S subunit contains 3 rRNA molecules (25S, 5.8S and 5S rRNA) and at least 46 different proteins.

It is found in the cytoplasm. Component of the ribosome, a large ribonucleoprotein complex responsible for the synthesis of proteins in the cell. The small ribosomal subunit (SSU) binds messenger RNAs (mRNAs) and translates the encoded message by selecting cognate aminoacyl-transfer RNA (tRNA) molecules. The large subunit (LSU) contains the ribosomal catalytic site termed the peptidyl transferase center (PTC), which catalyzes the formation of peptide bonds, thereby polymerizing the amino acids delivered by tRNAs into a polypeptide chain. The nascent polypeptides leave the ribosome through a tunnel in the LSU and interact with protein factors that function in enzymatic processing, targeting, and the membrane insertion of nascent chains at the exit of the ribosomal tunnel. The chain is Large ribosomal subunit protein eL43A (rpl4301) from Schizosaccharomyces pombe (strain 972 / ATCC 24843) (Fission yeast).